The chain runs to 476 residues: Ubiquinone biosynthesis monooxygenase COQ6, mitochondrial (476 aa).

The N-terminal 42 residues, 1–42 (MAARIGPMAGLLCVRWWSTAQLAARGGPLVACRRWTSSSTDS), are a transit peptide targeting the mitochondrion.

Belongs to the UbiH/COQ6 family. As to quaternary structure, component of a multi-subunit COQ enzyme complex, composed of at least COQ3, COQ4, COQ5, COQ6, COQ7 and COQ9. Interacts with COQ8B and COQ7. It depends on FAD as a cofactor. As to expression, in the kidney, expressed almost exclusively in glomerular podocytes. In the inner ear, expressed in the spiral ganglion, as well as in stria vascularis and spiral ligament cells.

The protein localises to the mitochondrion inner membrane. It localises to the golgi apparatus. The protein resides in the cell projection. The catalysed reaction is 4-hydroxy-3-(all-trans-decaprenyl)benzoate + 2 reduced [2Fe-2S]-[ferredoxin] + O2 + 2 H(+) = 3,4-dihydroxy-5-(all-trans-decaprenyl)benzoate + 2 oxidized [2Fe-2S]-[ferredoxin] + H2O. It catalyses the reaction 2-methoxy-6-(all-trans-decaprenyl)phenol + 2 reduced [2Fe-2S]-[ferredoxin] + O2 + 2 H(+) = 2-methoxy-6-(all-trans-decaprenyl)benzene-1,4-diol + 2 oxidized [2Fe-2S]-[ferredoxin] + H2O. It participates in cofactor biosynthesis; ubiquinone biosynthesis. FAD-dependent monooxygenase required for two non-consecutive steps during ubiquinone biosynthesis. Required for the C5-ring hydroxylation during ubiquinone biosynthesis by catalyzing the hydroxylation of 4-hydroxy-3-(all-trans-decaprenyl)benzoic acid to 3,4-dihydroxy-5-(all-trans-decaprenyl)benzoic acid. Also acts downstream of COQ4, for the C1-hydroxylation during ubiquinone biosynthesis by catalyzing the hydroxylation of 2-methoxy-6-(all-trans-decaprenyl)phenol to 2-methoxy-6-(all-trans-decaprenyl)benzene-1,4-diol. The electrons required for the hydroxylation reaction are funneled indirectly to COQ6 from NADPH via a ferredoxin/ferredoxin reductase system composed of FDX2 and FDXR. The protein is Ubiquinone biosynthesis monooxygenase COQ6, mitochondrial of Rattus norvegicus (Rat).